Reading from the N-terminus, the 94-residue chain is Pyrimidine/purine nucleoside phosphorylase (94 aa).

The protein belongs to the nucleoside phosphorylase PpnP family.

The enzyme catalyses a purine D-ribonucleoside + phosphate = a purine nucleobase + alpha-D-ribose 1-phosphate. It carries out the reaction adenosine + phosphate = alpha-D-ribose 1-phosphate + adenine. The catalysed reaction is cytidine + phosphate = cytosine + alpha-D-ribose 1-phosphate. It catalyses the reaction guanosine + phosphate = alpha-D-ribose 1-phosphate + guanine. The enzyme catalyses inosine + phosphate = alpha-D-ribose 1-phosphate + hypoxanthine. It carries out the reaction thymidine + phosphate = 2-deoxy-alpha-D-ribose 1-phosphate + thymine. The catalysed reaction is uridine + phosphate = alpha-D-ribose 1-phosphate + uracil. It catalyses the reaction xanthosine + phosphate = alpha-D-ribose 1-phosphate + xanthine. Functionally, catalyzes the phosphorolysis of diverse nucleosides, yielding D-ribose 1-phosphate and the respective free bases. Can use uridine, adenosine, guanosine, cytidine, thymidine, inosine and xanthosine as substrates. Also catalyzes the reverse reactions. This chain is Pyrimidine/purine nucleoside phosphorylase, found in Saccharophagus degradans (strain 2-40 / ATCC 43961 / DSM 17024).